We begin with the raw amino-acid sequence, 477 residues long: FAD-dependent monooxygenase paxM (477 aa).

A helical membrane pass occupies residues 4 to 24 (AEFQVIIVGGSIGGLTLAHCL). 3 residues coordinate FAD: Glu35, Gly49, and Arg108. Arg195 is an active-site residue. The FAD site is built by Asp308 and Ala321. The chain crosses the membrane as a helical span at residues 446–466 (LMIYLFGLTIVYTSLTMMFDL).

It belongs to the paxM FAD-dependent monooxygenase family. Requires FAD as cofactor.

The protein localises to the membrane. It participates in secondary metabolite biosynthesis. Its function is as follows. FAD-dependent monooxygenase; part of the gene cluster that mediates the biosynthesis of paxilline, a mycotoxin that acts as an inhibitor of mammalian maxi-K channels. PaxG, the geranylgeranyl diphosphate (GGPP) synthase is proposed to catalyze the first step in paxilline biosynthesis. Condensation of indole-3-glycerol phosphate with GGPP by paxC then forms 3-geranylgeranylindole (3-GGI), followed by epoxidation and cyclization of this intermediate (by paxM and paxB) to form paspaline. Paspaline is subsequently converted to 13-desoxypaxilline by paxP, the latter being then converted to paxilline by paxQ. Finally paxilline can be mono- and di-prenylated by paxD. The sequence is that of FAD-dependent monooxygenase paxM from Penicillium paxilli.